A 255-amino-acid polypeptide reads, in one-letter code: Phosphoribosyl isomerase A (255 aa).

Catalysis depends on Asp21, which acts as the Proton acceptor. The active-site Proton donor is Asp140.

This sequence belongs to the HisA/HisF family.

The protein localises to the cytoplasm. The enzyme catalyses 1-(5-phospho-beta-D-ribosyl)-5-[(5-phospho-beta-D-ribosylamino)methylideneamino]imidazole-4-carboxamide = 5-[(5-phospho-1-deoxy-D-ribulos-1-ylimino)methylamino]-1-(5-phospho-beta-D-ribosyl)imidazole-4-carboxamide. It carries out the reaction N-(5-phospho-beta-D-ribosyl)anthranilate = 1-(2-carboxyphenylamino)-1-deoxy-D-ribulose 5-phosphate. The protein operates within amino-acid biosynthesis; L-histidine biosynthesis; L-histidine from 5-phospho-alpha-D-ribose 1-diphosphate: step 4/9. Its pathway is amino-acid biosynthesis; L-tryptophan biosynthesis; L-tryptophan from chorismate: step 3/5. Functionally, involved in both the histidine and tryptophan biosynthetic pathways. This Mycolicibacterium vanbaalenii (strain DSM 7251 / JCM 13017 / BCRC 16820 / KCTC 9966 / NRRL B-24157 / PYR-1) (Mycobacterium vanbaalenii) protein is Phosphoribosyl isomerase A.